Here is a 632-residue protein sequence, read N- to C-terminus: Signal-transduction and transcriptional-control protein (632 aa).

Residues T197–M270 enclose the PAS domain. The Sigma-54 factor interaction domain maps to I324–N554. ATP-binding positions include G352–E359 and A416–E425. The segment at residues I606 to K625 is a DNA-binding region (H-T-H motif).

The protein is Signal-transduction and transcriptional-control protein (stc) of Clostridium beijerinckii (Clostridium MP).